The following is a 633-amino-acid chain: Threonine--tRNA ligase (633 aa).

The 61-residue stretch at 1-61 (MINVYFSDNS…TEDCKFEVIT (61 aa)) folds into the TGS domain. Residues 242–533 (DHRKIGKELE…LIEHHSGKLP (292 aa)) are catalytic. Residues C333, H384, and H510 each contribute to the Zn(2+) site.

It belongs to the class-II aminoacyl-tRNA synthetase family. In terms of assembly, homodimer. The cofactor is Zn(2+).

It is found in the cytoplasm. The catalysed reaction is tRNA(Thr) + L-threonine + ATP = L-threonyl-tRNA(Thr) + AMP + diphosphate + H(+). Its function is as follows. Catalyzes the attachment of threonine to tRNA(Thr) in a two-step reaction: L-threonine is first activated by ATP to form Thr-AMP and then transferred to the acceptor end of tRNA(Thr). Also edits incorrectly charged L-seryl-tRNA(Thr). The chain is Threonine--tRNA ligase from Ehrlichia ruminantium (strain Gardel).